Here is a 98-residue protein sequence, read N- to C-terminus: Co-chaperonin GroES (98 aa).

This sequence belongs to the GroES chaperonin family. Heptamer of 7 subunits arranged in a ring. Interacts with the chaperonin GroEL.

It is found in the cytoplasm. In terms of biological role, together with the chaperonin GroEL, plays an essential role in assisting protein folding. The GroEL-GroES system forms a nano-cage that allows encapsulation of the non-native substrate proteins and provides a physical environment optimized to promote and accelerate protein folding. GroES binds to the apical surface of the GroEL ring, thereby capping the opening of the GroEL channel. In Leifsonia xyli subsp. xyli (strain CTCB07), this protein is Co-chaperonin GroES.